The primary structure comprises 273 residues: Dermonecrotic toxin LapSicTox-alphaIB1bi (273 aa).

His5 is an active-site residue. Positions 25 and 27 each coordinate Mg(2+). Residue His41 is the Nucleophile of the active site. Disulfide bonds link Cys45-Cys51 and Cys47-Cys190. Residue Asp85 participates in Mg(2+) binding. 2 N-linked (GlcNAc...) asparagine glycosylation sites follow: Asn189 and Asn250.

It belongs to the arthropod phospholipase D family. Class II subfamily. Mg(2+) serves as cofactor. As to expression, expressed by the venom gland.

Its subcellular location is the secreted. It carries out the reaction an N-(acyl)-sphingosylphosphocholine = an N-(acyl)-sphingosyl-1,3-cyclic phosphate + choline. The catalysed reaction is an N-(acyl)-sphingosylphosphoethanolamine = an N-(acyl)-sphingosyl-1,3-cyclic phosphate + ethanolamine. It catalyses the reaction a 1-acyl-sn-glycero-3-phosphocholine = a 1-acyl-sn-glycero-2,3-cyclic phosphate + choline. The enzyme catalyses a 1-acyl-sn-glycero-3-phosphoethanolamine = a 1-acyl-sn-glycero-2,3-cyclic phosphate + ethanolamine. Functionally, dermonecrotic toxins cleave the phosphodiester linkage between the phosphate and headgroup of certain phospholipids (sphingolipid and lysolipid substrates), forming an alcohol (often choline) and a cyclic phosphate. This toxin acts on sphingomyelin (SM). It may also act on ceramide phosphoethanolamine (CPE), lysophosphatidylcholine (LPC) and lysophosphatidylethanolamine (LPE), but not on lysophosphatidylserine (LPS), and lysophosphatidylglycerol (LPG). It acts by transphosphatidylation, releasing exclusively cyclic phosphate products as second products. Induces dermonecrosis, hemolysis, increased vascular permeability, edema, inflammatory response, and platelet aggregation. This chain is Dermonecrotic toxin LapSicTox-alphaIB1bi, found in Loxosceles apachea (Apache recluse spider).